We begin with the raw amino-acid sequence, 498 residues long: Beta-1,3-glucosyltransferase (498 aa).

Over M1–C6 the chain is Cytoplasmic. A helical; Signal-anchor for type II membrane protein transmembrane segment spans residues W7–L27. Residues A28 to L498 are Lumenal-facing. N-linked (GlcNAc...) asparagine glycosylation occurs at N336. The Prevents secretion from ER signature appears at R495–L498.

This sequence belongs to the glycosyltransferase 31 family. Widely expressed, with highest levels in testis and uterus.

The protein resides in the endoplasmic reticulum membrane. It participates in protein modification; protein glycosylation. O-glucosyltransferase that transfers glucose toward fucose with a beta-1,3 linkage. Specifically glucosylates O-linked fucosylglycan on TSP type-1 domains of proteins, thereby contributing to elongation of O-fucosylglycan. The protein is Beta-1,3-glucosyltransferase of Homo sapiens (Human).